Consider the following 94-residue polypeptide: Large ribosomal subunit protein uL24c (94 aa).

Belongs to the universal ribosomal protein uL24 family. Part of the 50S ribosomal subunit.

Its subcellular location is the plastid. It localises to the chloroplast. In terms of biological role, one of two assembly initiator proteins, it binds directly to the 5'-end of the 23S rRNA, where it nucleates assembly of the 50S subunit. This is Large ribosomal subunit protein uL24c (rpl24) from Cyanidium caldarium (Red alga).